Consider the following 206-residue polypeptide: HTH-type transcriptional regulator BetI (206 aa).

The 61-residue stretch at 8 to 68 folds into the HTH tetR-type domain; it reads PLRRKALVDA…ETIRSLLRDL (61 aa). A DNA-binding region (H-T-H motif) is located at residues 31–50; the sequence is TMSDIAREAGVSAALAHHYF.

It functions in the pathway amine and polyamine biosynthesis; betaine biosynthesis via choline pathway [regulation]. In terms of biological role, repressor involved in the biosynthesis of the osmoprotectant glycine betaine. It represses transcription of the choline transporter BetT and the genes of BetAB involved in the synthesis of glycine betaine. The chain is HTH-type transcriptional regulator BetI from Agrobacterium fabrum (strain C58 / ATCC 33970) (Agrobacterium tumefaciens (strain C58)).